Here is a 489-residue protein sequence, read N- to C-terminus: DNA-dependent metalloprotease SPRTN (489 aa).

N-acetylmethionine is present on M1. Positions L45–I212 constitute a SprT-like domain. H111 serves as a coordination point for Zn(2+). E112 is a catalytic residue. Residues H115 and H130 each contribute to the Zn(2+) site. Residue K230 is modified to N6-acetyllysine. The SHP-box signature appears at F253 to G261. S268 bears the Phosphoserine mark. A Glycyl lysine isopeptide (Lys-Gly) (interchain with G-Cter in SUMO2) cross-link involves residue K303. The PIP-box signature appears at Q325–F332. K341 is covalently cross-linked (Glycyl lysine isopeptide (Lys-Gly) (interchain with G-Cter in SUMO2); alternate). Residue K341 forms a Glycyl lysine isopeptide (Lys-Gly) (interchain with G-Cter in ubiquitin); alternate linkage. The tract at residues G357 to P409 is disordered. K361 is covalently cross-linked (Glycyl lysine isopeptide (Lys-Gly) (interchain with G-Cter in SUMO2)). Low complexity predominate over residues S363–S383. A phosphoserine; by CHEK1 mark is found at S373 and S374. A Glycyl lysine isopeptide (Lys-Gly) (interchain with G-Cter in SUMO2); alternate cross-link involves residue K376. K376 is covalently cross-linked (Glycyl lysine isopeptide (Lys-Gly) (interchain with G-Cter in ubiquitin); alternate). Residue S383 is modified to Phosphoserine; by CHEK1. The segment covering K384–T403 has biased composition (polar residues). The short motif at D402–D413 is the Nuclear localization signal element. K414 participates in a covalent cross-link: Glycyl lysine isopeptide (Lys-Gly) (interchain with G-Cter in ubiquitin). Glycyl lysine isopeptide (Lys-Gly) (interchain with G-Cter in SUMO2) cross-links involve residues K423 and K424. A disordered region spans residues K428–M453. K435 participates in a covalent cross-link: Glycyl lysine isopeptide (Lys-Gly) (interchain with G-Cter in ubiquitin). Over residues S437 to S451 the composition is skewed to low complexity. The UBZ4-type zinc-finger motif lies at M453–S480. Residues C456, C459, H471, and C475 each coordinate Zn(2+). K484 is covalently cross-linked (Glycyl lysine isopeptide (Lys-Gly) (interchain with G-Cter in SUMO2)).

This sequence belongs to the Spartan family. Homodimer. Interacts (VIA PIP-box) with PCNA (when ubiquitinated). Interacts (via its SHP-box) with VCP/p97. Interacts with RAD18. Interacts with KCTD13 and POLD3. Requires Zn(2+) as cofactor. Post-translationally, autocatalytically cleaved in response to double-stranded DNA-binding: autocatalytic cleavage takes place in trans and leads to inactivation. In terms of processing, monoubiquitinated; monoubiquitination promotes exclusion from chromatin. Deubiquitinated by VCPIP1: deubiquitination is required for subsequent acetylation and recruitment to chromatin and DNA damage sites. Acetylated following deubiquitination by VCPIP1, leading to recruitment to chromatin and DNA damage sites. Post-translationally, phosphorylation by CHEK1 promotes recruitment to chromatin.

It localises to the nucleus. The protein resides in the chromosome. DNA-binding activates the protease activity: single-stranded DNA-binding specifically activates ability to cleave covalent DNA-protein cross-links (DPCs). In contrast, double-stranded DNA-binding specifically activates autocatalytic cleavage, and subsequent inactivation. DNA-dependent metalloendopeptidase that mediates the proteolytic cleavage of covalent DNA-protein cross-links (DPCs) during DNA synthesis, thereby playing a key role in maintaining genomic integrity. DPCs are highly toxic DNA lesions that interfere with essential chromatin transactions, such as replication and transcription, and which are induced by reactive agents, such as UV light or formaldehyde. Associates with the DNA replication machinery and specifically removes DPCs during DNA synthesis. Catalyzes proteolytic cleavage of the HMCES DNA-protein cross-link following unfolding by the BRIP1/FANCJ helicase. Acts as a pleiotropic protease for DNA-binding proteins cross-linked with DNA, such as TOP1, TOP2A, histones H3 and H4. Mediates degradation of DPCs that are not ubiquitinated, while it is not able to degrade ubiquitinated DPCs. SPRTN activation requires polymerase collision with DPCs followed by helicase bypass of DPCs. Involved in recruitment of VCP/p97 to sites of DNA damage. Also acts as an activator of CHEK1 during normal DNA replication by mediating proteolytic cleavage of CHEK1, thereby promoting CHEK1 removal from chromatin and subsequent activation. Does not activate CHEK1 in response to DNA damage. May also act as a 'reader' of ubiquitinated PCNA: recruited to sites of UV damage and interacts with ubiquitinated PCNA and RAD18, the E3 ubiquitin ligase that monoubiquitinates PCNA. Facilitates chromatin association of RAD18 and is required for efficient PCNA monoubiquitination, promoting a feed-forward loop to enhance PCNA ubiquitination and translesion DNA synthesis. This Homo sapiens (Human) protein is DNA-dependent metalloprotease SPRTN.